The chain runs to 410 residues: NADH-quinone oxidoreductase subunit H (410 aa).

Transmembrane regions (helical) follow at residues 16–36 (LILAKSLGVFVFLLLTVLAAI), 84–104 (WIYLAAPVISVIPAFMAFAVI), 124–144 (LPVAVLYILAVTSIGVYGIVL), 165–185 (VISYEIAMALSFVAVFIYAGT), 198–218 (VWFIFLLLPSFLVYLTSMVGE), 260–280 (VSALATTLFLGGWHAPWPISI), 288–308 (WWPLLWFTAKVWLFLFFFMWL), 320–340 (FMRLGWKLLIPVSLAWIAIVA), and 353–373 (WVTALIGVAGVAAILASLLAW). Residues 384–410 (SHSPPAQSSDHGAFPVPPLPVKEPADA) are disordered.

The protein belongs to the complex I subunit 1 family. In terms of assembly, NDH-1 is composed of 14 different subunits. Subunits NuoA, H, J, K, L, M, N constitute the membrane sector of the complex.

The protein resides in the cell membrane. The catalysed reaction is a quinone + NADH + 5 H(+)(in) = a quinol + NAD(+) + 4 H(+)(out). Its function is as follows. NDH-1 shuttles electrons from NADH, via FMN and iron-sulfur (Fe-S) centers, to quinones in the respiratory chain. The immediate electron acceptor for the enzyme in this species is believed to be menaquinone. Couples the redox reaction to proton translocation (for every two electrons transferred, four hydrogen ions are translocated across the cytoplasmic membrane), and thus conserves the redox energy in a proton gradient. This chain is NADH-quinone oxidoreductase subunit H, found in Mycolicibacterium gilvum (strain PYR-GCK) (Mycobacterium gilvum (strain PYR-GCK)).